The chain runs to 194 residues: Ion-translocating oxidoreductase complex subunit A (194 aa).

6 consecutive transmembrane segments (helical) span residues 5 to 25 (VLIL…FLGL), 47 to 67 (FVLT…LVPF), 72 to 92 (LRTI…EMFV), 102 to 122 (VLGV…VALL), 135 to 155 (LTYG…FAAM), and 172 to 192 (SIGL…SGLI).

The protein belongs to the NqrDE/RnfAE family. The complex is composed of six subunits: RnfA, RnfB, RnfC, RnfD, RnfE and RnfG.

The protein resides in the cell inner membrane. Functionally, part of a membrane-bound complex that couples electron transfer with translocation of ions across the membrane. The polypeptide is Ion-translocating oxidoreductase complex subunit A (Alcanivorax borkumensis (strain ATCC 700651 / DSM 11573 / NCIMB 13689 / SK2)).